The sequence spans 424 residues: Enolase (424 aa).

Gln163 is a (2R)-2-phosphoglycerate binding site. Catalysis depends on Glu204, which acts as the Proton donor. Mg(2+)-binding residues include Asp241, Glu284, and Asp311. Lys336, Arg365, Ser366, and Lys387 together coordinate (2R)-2-phosphoglycerate. The Proton acceptor role is filled by Lys336.

It belongs to the enolase family. The cofactor is Mg(2+).

It is found in the cytoplasm. It localises to the secreted. Its subcellular location is the cell surface. The catalysed reaction is (2R)-2-phosphoglycerate = phosphoenolpyruvate + H2O. The protein operates within carbohydrate degradation; glycolysis; pyruvate from D-glyceraldehyde 3-phosphate: step 4/5. Catalyzes the reversible conversion of 2-phosphoglycerate (2-PG) into phosphoenolpyruvate (PEP). It is essential for the degradation of carbohydrates via glycolysis. The sequence is that of Enolase from Dictyoglomus thermophilum (strain ATCC 35947 / DSM 3960 / H-6-12).